The primary structure comprises 231 residues: Octanoyltransferase (231 aa).

The 203-residue stretch at 29 to 231 folds into the BPL/LPL catalytic domain; the sequence is PQDPDLLWLC…GRQLCIWLAP (203 aa). Residues 68–75, 164–166, and 177–179 contribute to the substrate site; these read RGGQVTFH, ALG, and GVA. C195 serves as the catalytic Acyl-thioester intermediate.

Belongs to the LipB family.

The protein resides in the cytoplasm. The catalysed reaction is octanoyl-[ACP] + L-lysyl-[protein] = N(6)-octanoyl-L-lysyl-[protein] + holo-[ACP] + H(+). It functions in the pathway protein modification; protein lipoylation via endogenous pathway; protein N(6)-(lipoyl)lysine from octanoyl-[acyl-carrier-protein]: step 1/2. In terms of biological role, catalyzes the transfer of endogenously produced octanoic acid from octanoyl-acyl-carrier-protein onto the lipoyl domains of lipoate-dependent enzymes. Lipoyl-ACP can also act as a substrate although octanoyl-ACP is likely to be the physiological substrate. In Verminephrobacter eiseniae (strain EF01-2), this protein is Octanoyltransferase.